Here is a 2349-residue protein sequence, read N- to C-terminus: Reducing polyketide synthase hmp8 (2349 aa).

The 427-residue stretch at 9–435 (HVPVAIIGLA…GTNGHVVLEA (427 aa)) folds into the Ketosynthase family 3 (KS3) domain. Residues C182, H317, and H357 each act as for beta-ketoacyl synthase activity in the active site. The tract at residues 551–856 (FVFTGQGAQW…SHNGIKNVAY (306 aa)) is malonyl-CoA:ACP transacylase (MAT) domain. An N-terminal hotdog fold region spans residues 930–1066 (RSLIGAPVPM…GLVAIDYEES (137 aa)). Residues 930–1250 (RSLIGAPVPM…TSELDMDSGK (321 aa)) enclose the PKS/mFAS DH domain. Positions 932–1244 (LIGAPVPMMA…SVKDFRTSEL (313 aa)) are dehydratase (DH) domain. Residue H962 is the Proton acceptor; for dehydratase activity of the active site. Residues 1094–1250 (PEHYAHDKFY…TSELDMDSGK (157 aa)) are C-terminal hotdog fold. Residue D1160 is the Proton donor; for dehydratase activity of the active site. The interval 1641–1953 (GLLDTLKFVP…QGKHRGKMVL (313 aa)) is enoyl reductase (ER) domain. Positions 1977–2157 (ATYLFVGGLG…ISVNLGIMRD (181 aa)) are ketoreductase (KR) domain. A Carrier domain is found at 2267–2344 (EAAEIITDAL…SFAVKIAEKS (78 aa)). S2304 is modified (O-(pantetheine 4'-phosphoryl)serine).

The protein operates within secondary metabolite biosynthesis. Functionally, reducing polyketide synthase; part of the gene cluster that mediates the biosynthesis of hypothemycin, a resorcylic acid lactone (RAL) that irreversibly inhibits a subset of protein kinases with a conserved cysteine in the ATP binding site such as human ERK2. The first step is performed by both PKSs hmp3 and hmp8 and leads to the production of 7',8'-dehydrozearalenol (DHZ). The highly reducing PKS hpm8 synthesizes the reduced hexaketide (7S,11S,2E,8E)-7,11-dihydroxy-dodeca-2,8-dienoate, which is transferred downstream to the non-reducing PKS hpm3. Hpm3 then extends the reduced hexaketide to a nonaketide, after which regioselective cyclization and macrolactonization affords DHZ. The next step is the conversion of DHZ into aigialomycin C and is performed by the O-methyltransferase hmp5, the FAD-binding monooxygenase hmp7, and the cytochrome P450 monooxygenase hmp1. The wide substrate tolerance of the hmp5 and hmp7 implies that the reactions from DHZ to aigialomycin C can occur in any order. The steps from aigialomycin C to hypothemycin are less well established. The FAD-linked oxidoreductase hmp9 presumably catalyzes oxidation of the C-6' hydroxyl to a ketone. The timing of this oxidation is important, since the resulting enone functional group is a Michael acceptor that can react spontaneously with glutathione, an abundant metabolite in fungal cells. The glutathione S-transferase hmp2 catalyzes cis-trans isomerization of the 7',8' double bond with equilibrium favoring the trans isomer. The hpm6-encoded transporter might preferentially pump hypothemycin out of the cell relative to the trans isomer aigialomycin A. The cis-to-trans isomerization may be coupled with C-4' hydroxylation, since all known hypothemycin analogs containing the enone functional group also have hydroxyl groups at both C-4' and C-5'. This Hypomyces subiculosus (Nectria subiculosa) protein is Reducing polyketide synthase hmp8.